Consider the following 566-residue polypeptide: MKQSMVFSPTLREVPADAEIKSHQLLLRAGFMRQNASGIYSFLPFGLKVLHKVERIVREEMERAGAVELLMPAMQAAELWQESGRWYSYGSELMRMKDRNAREFALGATHEEVITDLVRDEVKSYKKLPLTLYQIQTKFRDEQRPRFGLLRGREFLMKDAYSFHATQESLDEVYDRLYKAYSNIFARCGLNFRAVIADSGAMGGKDTHEFMVLSDVGEDTIAYSDTSDYAANIEMAPVVATYTKSDEAEKALEKVATPDQKAIEEVSAFLNIEADKCIKSMVFKVDEKLVVVLVRGDHEVNDVKVKNVYGASVVELASHEEVKALLNWEVGSLGPINVTGDIEIIADHAVASIVNGCSGANEEGFHYVNVNPERDFKVSQYTDLRFIQEGDQSPDGNGTILFARGIEVGHVFKLGTRYSEAMNATFLDENGKTQPLIMGCYGIGVSRTVAAIAEQFNDENGLVWPKAVAPFHVHVIPVNMKSDAQREMGENIYNSLQEQGYEVLLDDRAERAGVKFADADLFGLPVRVTVGKKADEGIVEVKVRATGESEEVKVEELQTYIANILK.

This sequence belongs to the class-II aminoacyl-tRNA synthetase family. ProS type 1 subfamily. As to quaternary structure, homodimer.

It localises to the cytoplasm. It carries out the reaction tRNA(Pro) + L-proline + ATP = L-prolyl-tRNA(Pro) + AMP + diphosphate. Its function is as follows. Catalyzes the attachment of proline to tRNA(Pro) in a two-step reaction: proline is first activated by ATP to form Pro-AMP and then transferred to the acceptor end of tRNA(Pro). As ProRS can inadvertently accommodate and process non-cognate amino acids such as alanine and cysteine, to avoid such errors it has two additional distinct editing activities against alanine. One activity is designated as 'pretransfer' editing and involves the tRNA(Pro)-independent hydrolysis of activated Ala-AMP. The other activity is designated 'posttransfer' editing and involves deacylation of mischarged Ala-tRNA(Pro). The misacylated Cys-tRNA(Pro) is not edited by ProRS. This is Proline--tRNA ligase 1 from Bacillus cereus (strain ATCC 14579 / DSM 31 / CCUG 7414 / JCM 2152 / NBRC 15305 / NCIMB 9373 / NCTC 2599 / NRRL B-3711).